The primary structure comprises 101 residues: Small ribosomal subunit protein uS14 (101 aa).

This sequence belongs to the universal ribosomal protein uS14 family. Part of the 30S ribosomal subunit. Contacts proteins S3 and S10.

In terms of biological role, binds 16S rRNA, required for the assembly of 30S particles and may also be responsible for determining the conformation of the 16S rRNA at the A site. This chain is Small ribosomal subunit protein uS14, found in Corynebacterium efficiens (strain DSM 44549 / YS-314 / AJ 12310 / JCM 11189 / NBRC 100395).